The sequence spans 204 residues: bMERB domain-containing protein 1 (204 aa).

One can recognise a bMERB domain in the interval 3–150 (LKQSLSTHLE…EQEEDKEMAD (148 aa)). A disordered region spans residues 162–187 (VTKSPASSRAEKKAEPPPSKPTVAKT).

This chain is bMERB domain-containing protein 1 (BMERB1), found in Pongo abelii (Sumatran orangutan).